The following is a 247-amino-acid chain: Ferredoxin:CoB-CoM heterodisulfide reductase subunit C (247 aa).

The 4Fe-4S ferredoxin-type domain maps to 32 to 62; that stretch reads TPESLGLDRCIQCGACTASCPAARFTDYSPR. [4Fe-4S] cluster contacts are provided by Cys-41, Cys-44, Cys-47, Cys-51, Cys-84, Cys-87, Cys-90, and Cys-94. Basic and acidic residues predominate over residues 216–240; that stretch reads RTGTSCTEKKKNSGDLGFESDREYT. Residues 216 to 247 form a disordered region; sequence RTGTSCTEKKKNSGDLGFESDREYTGQEALTV.

The protein belongs to the HdrC family. As to quaternary structure, the ferredoxin:CoB-CoM heterodisulfide reductase is composed of three subunits; HdrA1, HdrB1 and HdrC1. The cofactor is [4Fe-4S] cluster.

The protein resides in the cytoplasm. The enzyme catalyses coenzyme B + coenzyme M + 2 oxidized [2Fe-2S]-[ferredoxin] = coenzyme M-coenzyme B heterodisulfide + 2 reduced [2Fe-2S]-[ferredoxin] + 2 H(+). Its pathway is cofactor metabolism; coenzyme M-coenzyme B heterodisulfide reduction; coenzyme B and coenzyme M from coenzyme M-coenzyme B heterodisulfide: step 1/1. Part of a complex that catalyzes the reversible reduction of CoM-S-S-CoB to the thiol-coenzymes H-S-CoM (coenzyme M) and H-S-CoB (coenzyme B). Probably involved in methylotrophic methanogenesis but not in aceticlastic methanogenesis. This chain is Ferredoxin:CoB-CoM heterodisulfide reductase subunit C, found in Methanosarcina acetivorans (strain ATCC 35395 / DSM 2834 / JCM 12185 / C2A).